Here is a 796-residue protein sequence, read N- to C-terminus: MDVDVEEAALEQVAALLQRPDQLEKLPELKKRADRKKLAVEAMLRTGVQGQLEGIRTAIAHLQTASDDITAISQGVHDIRERLGPFPQLKEKLRELRDANARHGQYAAAMENLKHIFNLQTTLQEIRDALDDEKSGGNLLLAHKHIMDLERARDELLAEVHKMSGTNTEKEQMLLVNFFKGVDSVVAELSKNMWFILGRTLEMVKGNEQGGGPQQVVTCLRIVEREERIDKFYMEARSKNSSAFVPPGRPRNWKEKALRSLEKTVSNRVDGNQLEDRSLNKAWLARYLEVCKNVIMDDLQLAKVAIPCFPPDWQIYDRYVHMYHTSVCRRLREVASEHLEKSELVQLMSWIKFYASEDMLGHPKLRINAQAILQDSPVLSRSTLNQLCDQFVEMSRDDLKLWLKNTVSHETHDWYKNLRPSEDNHGYFYTDLPNTVFGMLKDTVTLAKEVSVEVIPSIINLTIQEFNELAGKYRDAFTAYKTDYFAERSKYQEFTSNIIAIANNLHTCIESTEKYKQQIRLSMEGEQNAAAAMTTPLASGRRTAVRQQQLIENMDALNTKWSNAASVAVNYLREEVITDIAPSLVEIFSKKWLTGSAALETVCMTISDYYHDHKHLRPVTRSTLLMDLQFRIVSEYLKAIETKRVSLNSYEERALAGKRMKADVVRLDNLYAEFATSSDMADQLPLLTSIVAAAGDVISLKDKSLLSLEATSFARKFPNCPAELLSAVIATRDDISGSEARSLASEVLQHVQFHPKDQIFDQLFALRQQENSERLPNLGMANMFKADFMSMLKRDA.

Residues 87 to 174 (PQLKEKLREL…GTNTEKEQML (88 aa)) are a coiled coil.

This sequence belongs to the SEC6 family. The exocyst complex is composed of sec-3/exoc1, sec-5/exoc2, sec-6/exoc3, sec-8/exoc4, sec-10/exoc5, sec-15/exoc6, exo-70/exoc7 and exo-84/exoc8.

Its function is as follows. Component of the exocyst complex involved in the docking of exocytic vesicles with fusion sites on the plasma membrane. The polypeptide is Exocyst complex component 3 (sec-6) (Caenorhabditis elegans).